Consider the following 458-residue polypeptide: Cell division protein FtsZ (458 aa).

GTP-binding positions include 22 to 26, 109 to 111, glutamate 140, arginine 144, and aspartate 188; these read GAGGN and GTG. Residues 319–458 form a disordered region; it reads KAEEEASKQP…IPFFKHRRQD (140 aa). Residues 368–379 show a composition bias toward polar residues; that stretch reads NTISHEAPTQSI. The span at 401 to 418 shows a compositional bias: basic and acidic residues; the sequence is KQDRKENNRPQPVENKEK. Over residues 425 to 439 the composition is skewed to low complexity; that stretch reads SFSSDDSTSISQIET.

The protein belongs to the FtsZ family. As to quaternary structure, homodimer. Polymerizes to form a dynamic ring structure in a strictly GTP-dependent manner. Interacts directly with several other division proteins.

Its subcellular location is the cytoplasm. Functionally, essential cell division protein that forms a contractile ring structure (Z ring) at the future cell division site. The regulation of the ring assembly controls the timing and the location of cell division. One of the functions of the FtsZ ring is to recruit other cell division proteins to the septum to produce a new cell wall between the dividing cells. Binds GTP and shows GTPase activity. This is Cell division protein FtsZ from Lactobacillus johnsonii (strain CNCM I-12250 / La1 / NCC 533).